A 292-amino-acid chain; its full sequence is Sulfhydrogenase 1 subunit gamma (292 aa).

An FAD-binding FR-type domain is found at 15 to 115; sequence YALHRVKVLK…RGPYGNGFPV (101 aa). [2Fe-2S] cluster-binding residues include Cys253, Cys258, Cys261, and Cys273.

As to quaternary structure, heterotetramer of alpha, beta, gamma and delta subunits. The nickel-containing alpha and delta subunits constitute the hydrogenase activity. The beta and gamma subunits (flavin-containing dimer) constitute the sulfur reductase activity. It depends on FAD as a cofactor. Requires [2Fe-2S] cluster as cofactor.

It localises to the cytoplasm. The enzyme catalyses n sulfur + H2 = (n-1) sulfur + hydrogen sulfide + H(+). With respect to regulation, stimulated by rubredoxin at pH 7.6 but not ferredoxin. In terms of biological role, part of a bifunctional enzyme complex that functions as an NADPH-dependent hydrogen-evolving hydrogenase with sulfur reducing activity. May play a role in hydrogen cycling during fermentative growth. Activity not exhibited with NAD. The beta and gamma subunits form the sulfur reducing component that catalyzes the cytoplasmic production of hydrogen sulfide in the presence of elemental sulfur. Not active in the presence of sodium sulfate, sodium sulfite, sodium thiosulfate or cysteine. The protein is Sulfhydrogenase 1 subunit gamma of Pyrococcus furiosus (strain ATCC 43587 / DSM 3638 / JCM 8422 / Vc1).